A 461-amino-acid chain; its full sequence is Glycine--tRNA ligase (461 aa).

Positions 100 and 174 each coordinate substrate. ATP contacts are provided by residues 206–208, 216–221, 290–291, and 334–337; these read RNE, FRTREF, EL, and GVDR. 221–225 is a binding site for substrate; it reads FEQME. 330–334 lines the substrate pocket; sequence EPSVG.

It belongs to the class-II aminoacyl-tRNA synthetase family. As to quaternary structure, homodimer.

Its subcellular location is the cytoplasm. It catalyses the reaction tRNA(Gly) + glycine + ATP = glycyl-tRNA(Gly) + AMP + diphosphate. In terms of biological role, catalyzes the attachment of glycine to tRNA(Gly). This chain is Glycine--tRNA ligase, found in Caldanaerobacter subterraneus subsp. tengcongensis (strain DSM 15242 / JCM 11007 / NBRC 100824 / MB4) (Thermoanaerobacter tengcongensis).